We begin with the raw amino-acid sequence, 422 residues long: Choline monooxygenase, chloroplastic (422 aa).

The N-terminal 47 residues, 1-47 (MMTTLTATVPEFLPPSLKSTRGYFNSHSEFGVSISKFSRRRFHNPTR), are a transit peptide targeting the chloroplast. The Rieske domain occupies 96-203 (WQAVGYSDQI…VAVWGPFVLL (108 aa)). 4 residues coordinate [2Fe-2S] cluster: Cys-138, His-140, Cys-157, and His-160. Fe cation-binding residues include His-269 and His-274.

This sequence belongs to the choline monooxygenase family. It depends on [2Fe-2S] cluster as a cofactor. The cofactor is Fe cation. Mg(2+) serves as cofactor.

The protein resides in the plastid. The protein localises to the chloroplast stroma. It catalyses the reaction choline + 2 reduced [2Fe-2S]-[ferredoxin] + O2 + 2 H(+) = betaine aldehyde hydrate + 2 oxidized [2Fe-2S]-[ferredoxin] + H2O. The protein operates within amine and polyamine biosynthesis; betaine biosynthesis via choline pathway; betaine aldehyde from choline (monooxygenase route): step 1/1. Catalyzes the first step of the osmoprotectant glycine betaine synthesis. This chain is Choline monooxygenase, chloroplastic, found in Arabidopsis thaliana (Mouse-ear cress).